The following is an 88-amino-acid chain: Acyl-CoA-binding domain-containing protein 7 (88 aa).

One can recognise an ACB domain in the interval 3–88 (LQADFDQAAQ…ARELIEKYGI (86 aa)). Residues Arg15, 30-34 (YGLYK), Lys56, and Tyr75 each bind an acyl-CoA.

Belongs to the ACBD7 family.

In terms of biological role, binds medium- and long-chain acyl-CoA esters. The sequence is that of Acyl-CoA-binding domain-containing protein 7 (Acbd7) from Mus musculus (Mouse).